Reading from the N-terminus, the 160-residue chain is Transcriptional repressor NrdR (160 aa).

The segment at Cys-3–Cys-34 is a zinc-finger region. An ATP-cone domain is found at Pro-49–Glu-139.

It belongs to the NrdR family. Requires Zn(2+) as cofactor.

Negatively regulates transcription of bacterial ribonucleotide reductase nrd genes and operons by binding to NrdR-boxes. The chain is Transcriptional repressor NrdR from Bordetella bronchiseptica (strain ATCC BAA-588 / NCTC 13252 / RB50) (Alcaligenes bronchisepticus).